A 395-amino-acid chain; its full sequence is L-lactate dehydrogenase (395 aa).

An FMN hydroxy acid dehydrogenase domain is found at 1-380 (MIISAASDYR…SKDSLVQELS (380 aa)). Y24 is a substrate binding site. Residues S106 and Q127 each coordinate FMN. Y129 is a binding site for substrate. T155 lines the FMN pocket. A substrate-binding site is contributed by R164. Residue K251 coordinates FMN. H275 serves as the catalytic Proton acceptor. R278 provides a ligand contact to substrate. 306 to 330 (DSGIRNGLDVVRMIALGADSVLLGR) contacts FMN.

It belongs to the FMN-dependent alpha-hydroxy acid dehydrogenase family. FMN serves as cofactor.

The protein localises to the cell inner membrane. It catalyses the reaction (S)-lactate + A = pyruvate + AH2. In terms of biological role, catalyzes the conversion of L-lactate to pyruvate. Is coupled to the respiratory chain. This Enterobacter sp. (strain 638) protein is L-lactate dehydrogenase.